A 385-amino-acid chain; its full sequence is Telomere-binding protein subunit beta (385 aa).

Disordered stretches follow at residues 231–329 (AADH…ALTT) and 343–385 (WHEK…AAKK). A compositionally biased stretch (basic residues) spans 242-262 (GGAKGKGKAAAKAAKGKKLSA). The span at 263–280 (KKGDSSAADVRKSVDKIV) shows a compositional bias: basic and acidic residues. Composition is skewed to low complexity over residues 295 to 304 (KSQAPAAGKS), 312 to 326 (KAVPSAPSPSGKKSA), and 365 to 375 (GKASATSGKAS). Residues 376–385 (KASKKTAAKK) are compositionally biased toward basic residues.

Heterodimer of an alpha and a beta subunit.

The protein resides in the nucleus. The protein localises to the chromosome. It is found in the telomere. Its function is as follows. May function as protective capping of the single-stranded telomeric overhang. May also participate in telomere length regulation during DNA replication. Binds specifically to the T4G4-containing extension on the 3'strand and protects this region of the telomere from nuclease digestion and chemical modification. This Sterkiella nova (Ciliate) protein is Telomere-binding protein subunit beta (MAC-41A).